Reading from the N-terminus, the 517-residue chain is E3 ubiquitin-protein ligase TRIM65 (517 aa).

Position 2 is an N-acetylalanine (alanine 2). Residues 12–51 (CAICLGLYQDPVTLPCGHNFCGACIRDWWDRCGKACPECR) form an RING-type zinc finger. The tract at residues 75 to 94 (AGPARDPGPDPGPGPDPAAR) is disordered. The B box-type zinc-finger motif lies at 90–137 (DPAARCPRHGRPLELFCRTEGRCVCSVCTVRECRLHERALLDAERLKR). Residues cysteine 95, histidine 98, cysteine 117, and histidine 125 each coordinate Zn(2+). A coiled-coil region spans residues 139–227 (AQLRASLEVT…QRLRVHLEAV (89 aa)). Serine 185 bears the Phosphoserine mark. A (Microbial infection) Glycyl lysine isopeptide (Lys-Gly) (interchain with G-Cter in ubiquitin) cross-link involves residue lysine 206. The region spanning 313–506 (APVPSTVCPL…LTLCHQPGAV (194 aa)) is the B30.2/SPRY domain.

The protein belongs to the TRIM/RBCC family. In terms of assembly, homo-multimerizes. Interacts with ARRDC4.

Its subcellular location is the cytoplasm. The catalysed reaction is S-ubiquitinyl-[E2 ubiquitin-conjugating enzyme]-L-cysteine + [acceptor protein]-L-lysine = [E2 ubiquitin-conjugating enzyme]-L-cysteine + N(6)-ubiquitinyl-[acceptor protein]-L-lysine.. It participates in protein modification; protein ubiquitination. E3 ubiquitin ligase that plays a role in several processes including innate immnity, autophagy or inflammation. Negatively regulates miRNAs by modulating the ubiquitination and stability of TNRC6A, a protein involved in RNA-mediated gene silencing by both micro-RNAs (miRNAs) and short interfering RNAs. This ubiquitination results in the suppressed expression of miR-138-5p leading to increased autophagy. Upon enteroviral infection, promotes 'Lys-63'-mediated ubiquitination activation of IFIH1/MDA5 leading to innate signaling cascade. Mechanistically, selectively recognizes MDA5 filaments that occur on dsRNAs. Plays also a role in limitation of inflammation through different mechanisms. First, promotes 'Lys-48'-mediated ubiquitination of VCAM1 leading to its degradation and limitation of LPS-induced lung inflammation. In addition, negatively regulates inflammasome activation by promoting 'lys48'-linked ubiquitination of NLRP3 which is critical for the inhibition of NLRP3 inflammasome activation in resting macrophages. This is E3 ubiquitin-protein ligase TRIM65 (TRIM65) from Homo sapiens (Human).